Here is a 213-residue protein sequence, read N- to C-terminus: A-type ATP synthase subunit D (213 aa).

The protein belongs to the V-ATPase D subunit family. Has multiple subunits with at least A(3), B(3), C, D, E, F, H, I and proteolipid K(x).

The protein localises to the cell membrane. Its function is as follows. Component of the A-type ATP synthase that produces ATP from ADP in the presence of a proton gradient across the membrane. The protein is A-type ATP synthase subunit D of Saccharolobus solfataricus (strain ATCC 35092 / DSM 1617 / JCM 11322 / P2) (Sulfolobus solfataricus).